We begin with the raw amino-acid sequence, 588 residues long: Mitochondrial tRNA methylthiotransferase CDK5RAP1 (588 aa).

The transit peptide at 1 to 30 directs the protein to the mitochondrion; it reads MHPLRCVLQVQRLSAPFTSMCWVLLRTCRA. Disordered regions lie at residues 33–53 and 70–91; these read SVSS…QKDF and ASVP…YLSG. Positions 99 to 219 constitute an MTTase N-terminal domain; the sequence is RKVYLETYGC…LPRLLAVVES (121 aa). [4Fe-4S] cluster is bound by residues Cys-108, Cys-144, Cys-182, Cys-257, Cys-261, and Cys-264. The region spanning 243 to 498 is the Radical SAM core domain; sequence SPSATSAFVS…TVFREEASKA (256 aa). Residues 500-575 enclose the TRAM domain; sequence KTSVGCSQLV…SQTLKGHILC (76 aa).

Belongs to the methylthiotransferase family. MiaB subfamily. In terms of assembly, interacts with CDK5R1 (p35 form). CDK5RAP1, CDK5RAP2 and CDK5RAP3 show competitive binding to CDK5R1. Probably forms a complex with CDK5R1 and CDK5. The cofactor is [4Fe-4S] cluster. Expressed in brain, liver, skeletal muscle and heart.

It is found in the mitochondrion. It catalyses the reaction N(6)-dimethylallyladenosine(37) in tRNA + (sulfur carrier)-SH + AH2 + 2 S-adenosyl-L-methionine = 2-methylsulfanyl-N(6)-dimethylallyladenosine(37) in tRNA + (sulfur carrier)-H + 5'-deoxyadenosine + L-methionine + A + S-adenosyl-L-homocysteine + 2 H(+). Functionally, methylthiotransferase that catalyzes the conversion of N6-(dimethylallyl)adenosine (i(6)A) to 2-methylthio-N6-(dimethylallyl)adenosine (ms(2)i(6)A) at position 37 (adjacent to the 3'-end of the anticodon) of four mitochondrial DNA-encoded tRNAs (Ser(UCN), Phe, Tyr and Trp). Essential for efficient and highly accurate protein translation by the ribosome. Specifically inhibits CDK5 activation by CDK5R1. Essential for efficient mitochondrial protein synthesis and respiratory chain. This is Mitochondrial tRNA methylthiotransferase CDK5RAP1 from Mus musculus (Mouse).